Here is a 945-residue protein sequence, read N- to C-terminus: Translation initiation factor IF-2 (945 aa).

2 disordered regions span residues Arg52–Gly80 and Met96–Pro357. Positions Pro153–Pro175 are enriched in acidic residues. Basic and acidic residues-rich tracts occupy residues Asp215–Ala283 and Ala294–Arg310. Positions Pro445 to Thr614 constitute a tr-type G domain. Positions Gly454 to Thr461 are G1. Gly454 to Thr461 is a GTP binding site. Residues Gly479 to His483 are G2. The interval Asp500–Gly503 is G3. GTP contacts are provided by residues Asp500–His504 and Asn554–Asp557. The segment at Asn554–Asp557 is G4. The tract at residues Ser590 to Lys592 is G5.

This sequence belongs to the TRAFAC class translation factor GTPase superfamily. Classic translation factor GTPase family. IF-2 subfamily.

The protein resides in the cytoplasm. In terms of biological role, one of the essential components for the initiation of protein synthesis. Protects formylmethionyl-tRNA from spontaneous hydrolysis and promotes its binding to the 30S ribosomal subunits. Also involved in the hydrolysis of GTP during the formation of the 70S ribosomal complex. The chain is Translation initiation factor IF-2 from Aromatoleum aromaticum (strain DSM 19018 / LMG 30748 / EbN1) (Azoarcus sp. (strain EbN1)).